Here is a 304-residue protein sequence, read N- to C-terminus: ATP phosphoribosyltransferase (304 aa).

The protein belongs to the ATP phosphoribosyltransferase family. Long subfamily. Requires Mg(2+) as cofactor.

It is found in the cytoplasm. It carries out the reaction 1-(5-phospho-beta-D-ribosyl)-ATP + diphosphate = 5-phospho-alpha-D-ribose 1-diphosphate + ATP. It functions in the pathway amino-acid biosynthesis; L-histidine biosynthesis; L-histidine from 5-phospho-alpha-D-ribose 1-diphosphate: step 1/9. With respect to regulation, feedback inhibited by histidine. Functionally, catalyzes the condensation of ATP and 5-phosphoribose 1-diphosphate to form N'-(5'-phosphoribosyl)-ATP (PR-ATP). Has a crucial role in the pathway because the rate of histidine biosynthesis seems to be controlled primarily by regulation of HisG enzymatic activity. The chain is ATP phosphoribosyltransferase from Xylella fastidiosa (strain M12).